Reading from the N-terminus, the 566-residue chain is Urease subunit alpha (566 aa).

The region spanning 128 to 566 is the Urease domain; it reads GGVDTHIHFI…LPMAQRYFLF (439 aa). Residues His-133, His-135, and Lys-216 each coordinate Ni(2+). N6-carboxylysine is present on Lys-216. His-218 contacts substrate. The Ni(2+) site is built by His-245 and His-271. His-319 functions as the Proton donor in the catalytic mechanism. Asp-359 contributes to the Ni(2+) binding site.

The protein belongs to the metallo-dependent hydrolases superfamily. Urease alpha subunit family. May form a heterohexamer of 3 UreC (alpha) and 3 UreAB (gamma/beta) subunits. May also form a heterotrimer of UreA (gamma), UreB (beta) and UreC (alpha) subunits. Three heterotrimers associate to form the active enzyme. It depends on Ni cation as a cofactor. Carboxylation allows a single lysine to coordinate two nickel ions.

It is found in the cytoplasm. The enzyme catalyses urea + 2 H2O + H(+) = hydrogencarbonate + 2 NH4(+). It participates in nitrogen metabolism; urea degradation; CO(2) and NH(3) from urea (urease route): step 1/1. In Pseudomonas savastanoi pv. phaseolicola (strain 1448A / Race 6) (Pseudomonas syringae pv. phaseolicola (strain 1448A / Race 6)), this protein is Urease subunit alpha.